Reading from the N-terminus, the 165-residue chain is Fimbrial protein (165 aa).

The first 21 residues, 1 to 21 (MRKSASAVAVLALIACGSAHA), serve as a signal peptide directing secretion.

It is found in the fimbrium. Structural subunit of the sef14 fimbriae. In Salmonella enteritidis, this protein is Fimbrial protein (sefA).